A 194-amino-acid polypeptide reads, in one-letter code: Peptidyl-tRNA hydrolase (194 aa).

Tyr17 contributes to the tRNA binding site. The active-site Proton acceptor is the His22. Residues Tyr68, Asn70, and Asn116 each contribute to the tRNA site.

Belongs to the PTH family. Monomer.

It is found in the cytoplasm. It carries out the reaction an N-acyl-L-alpha-aminoacyl-tRNA + H2O = an N-acyl-L-amino acid + a tRNA + H(+). In terms of biological role, hydrolyzes ribosome-free peptidyl-tRNAs (with 1 or more amino acids incorporated), which drop off the ribosome during protein synthesis, or as a result of ribosome stalling. Its function is as follows. Catalyzes the release of premature peptidyl moieties from peptidyl-tRNA molecules trapped in stalled 50S ribosomal subunits, and thus maintains levels of free tRNAs and 50S ribosomes. This Pseudomonas syringae pv. syringae (strain B728a) protein is Peptidyl-tRNA hydrolase.